The primary structure comprises 334 residues: Transcription initiation factor IIB (334 aa).

The segment at 34–65 (TESVCPECKSRQLVHDYERAELVCQNCGLVID) adopts a TFIIB-type zinc-finger fold. C38, C41, C57, and C60 together coordinate Zn(2+). Repeat copies occupy residues 151–234 (SELD…SREL) and 245–326 (DYVP…ELAE).

This sequence belongs to the TFIIB family.

In terms of biological role, stabilizes TBP binding to an archaeal box-A promoter. Also responsible for recruiting RNA polymerase II to the pre-initiation complex (DNA-TBP-TFIIB). This Methanosphaerula palustris (strain ATCC BAA-1556 / DSM 19958 / E1-9c) protein is Transcription initiation factor IIB.